The sequence spans 349 residues: C-X-C chemokine receptor type 1 (349 aa).

Over 1–44 (MAEAEYFIWIAPEGDFEEEFGNITRMLPTGEYFSPCKRVPMTNR) the chain is Extracellular. N-linked (GlcNAc...) asparagine glycosylation occurs at Asn22. Residues 45-71 (QAVVVFYALVFLLSLLGNSLVMLVILY) form a helical membrane-spanning segment. At 72-80 (RRRTRSVTD) the chain is on the cytoplasmic side. A helical membrane pass occupies residues 81 to 101 (VYVLNLAIADLLFSLTLPFLA). At 102-116 (VSKWKGWIFGTPLCK) the chain is on the extracellular side. Cys115 and Cys192 are oxidised to a cystine. Residues 117–138 (MVSLLKEVNFFSGILLLACISV) form a helical membrane-spanning segment. Residues 139 to 159 (DRYLAIVHATRTLTRKRYLVK) are Cytoplasmic-facing. The helical transmembrane segment at 160–179 (FVCMGTWGLSLVLSLPFAIF) threads the bilayer. Over 180–204 (RQAYKPYRSGTVCYEVLGEATADLR) the chain is Extracellular. The helical transmembrane segment at 205–225 (ITLRGLSHIFGFLLPLFIMLV) threads the bilayer. Residues 226-247 (CYGLTLRTLFKAHMRQKRRAMW) lie on the Cytoplasmic side of the membrane. The chain crosses the membrane as a helical span at residues 248-269 (VIFAVVLVFLLCCLPYNLVLLS). At 270-290 (DTLLGAHLIQDTCERRNNIDQ) the chain is on the extracellular side. Residues 291 to 313 (ALYITEILGFSHSCLNPVIYAFV) traverse the membrane as a helical segment. Over 314 to 349 (GQSFRHEFLKILANLVHKEVLTHHSASFRTSLTTIY) the chain is Cytoplasmic.

It belongs to the G-protein coupled receptor 1 family. In terms of assembly, interacts with IL8. Interacts with GNAI2.

The protein resides in the cell membrane. In terms of biological role, receptor to interleukin-8, which is a powerful neutrophils chemotactic factor. Binding of IL-8 to the receptor causes activation of neutrophils. This response is mediated via a G-protein that activates a phosphatidylinositol-calcium second messenger system. This is C-X-C chemokine receptor type 1 (Cxcr1) from Rattus norvegicus (Rat).